Reading from the N-terminus, the 266-residue chain is Translation initiation factor 2 subunit alpha (266 aa).

The S1 motif domain maps to 12–83 (GEILIATVKQ…RKGTVDVSLK (72 aa)).

Belongs to the eIF-2-alpha family. Heterotrimer composed of an alpha, a beta and a gamma chain.

In terms of biological role, eIF-2 functions in the early steps of protein synthesis by forming a ternary complex with GTP and initiator tRNA. This chain is Translation initiation factor 2 subunit alpha, found in Saccharolobus islandicus (strain M.16.27) (Sulfolobus islandicus).